The primary structure comprises 44 residues: Cytochrome b559 subunit beta (44 aa).

The chain crosses the membrane as a helical span at residues 19 to 35 (WLAIHGLAIPTVFFLGA). H23 contacts heme.

It belongs to the PsbE/PsbF family. Heterodimer of an alpha subunit and a beta subunit. PSII is composed of 1 copy each of membrane proteins PsbA, PsbB, PsbC, PsbD, PsbE, PsbF, PsbH, PsbI, PsbJ, PsbK, PsbL, PsbM, PsbT, PsbX, PsbY, PsbZ, Psb30/Ycf12, at least 3 peripheral proteins of the oxygen-evolving complex and a large number of cofactors. It forms dimeric complexes. The cofactor is heme b.

It localises to the plastid. Its subcellular location is the chloroplast thylakoid membrane. In terms of biological role, this b-type cytochrome is tightly associated with the reaction center of photosystem II (PSII). PSII is a light-driven water:plastoquinone oxidoreductase that uses light energy to abstract electrons from H(2)O, generating O(2) and a proton gradient subsequently used for ATP formation. It consists of a core antenna complex that captures photons, and an electron transfer chain that converts photonic excitation into a charge separation. This chain is Cytochrome b559 subunit beta, found in Porphyra purpurea (Red seaweed).